The chain runs to 310 residues: Olfactory receptor 9A2 (310 aa).

At 1-24 the chain is on the extracellular side; that stretch reads MMDNHSSATEFHLLGFPGSQGLHH. Asn4 is a glycosylation site (N-linked (GlcNAc...) asparagine). A helical transmembrane segment spans residues 25–45; sequence ILFAIFFFFYLVTLMGNTVII. Residues 46 to 53 are Cytoplasmic-facing; the sequence is VIVCVDKR. A helical membrane pass occupies residues 54–74; that stretch reads LQSPMYFFLSHLSTLEILVTT. The Extracellular portion of the chain corresponds to 75 to 98; the sequence is IIVPMMLWGLLFLGCRQYLSLHVS. Topologically, residues 117-135 are cytoplasmic; that stretch reads DRYVAVCNPLRYNIIMNSS. A helical membrane pass occupies residues 136 to 156; sequence TCIWVVIVSWVFGFLSEIWPI. Over 157–193 the chain is Extracellular; the sequence is YATFQFTFRKSNSLDHFYCDRGQLLKLSCDNTLLTEF. The helical transmembrane segment at 194–213 threads the bilayer; it reads ILFLMAVFILIGSLIPTIVS. Residues 214–233 lie on the Cytoplasmic side of the membrane; it reads YTYIISTILKIPSASGRRKA. A helical membrane pass occupies residues 234 to 254; the sequence is FSTFASHFTCVVIGYGSCLFL. The Extracellular segment spans residues 255–267; the sequence is YVKPKQTQGVEYN. A helical membrane pass occupies residues 268–288; sequence KIVSLLVSVLTPFLNPFIFTL. Residues 289–310 lie on the Cytoplasmic side of the membrane; that stretch reads RNDKVKEALRDGMKRCCQLLKD.

It belongs to the G-protein coupled receptor 1 family.

Its subcellular location is the cell membrane. Its function is as follows. Odorant receptor. The chain is Olfactory receptor 9A2 (OR9A2) from Homo sapiens (Human).